We begin with the raw amino-acid sequence, 541 residues long: Glycogen synthase (541 aa).

An ADP-alpha-D-glucose-binding site is contributed by K17. Residues 497 to 541 (LARPASPPDTAPVGKPARRRRTTALSTTARAHPVARAAGREKIRA) form a disordered region.

The protein belongs to the glycosyltransferase 1 family. Bacterial/plant glycogen synthase subfamily.

It carries out the reaction [(1-&gt;4)-alpha-D-glucosyl](n) + ADP-alpha-D-glucose = [(1-&gt;4)-alpha-D-glucosyl](n+1) + ADP + H(+). It functions in the pathway glycan biosynthesis; glycogen biosynthesis. Synthesizes alpha-1,4-glucan chains using ADP-glucose. The protein is Glycogen synthase of Ralstonia nicotianae (strain ATCC BAA-1114 / GMI1000) (Ralstonia solanacearum).